The chain runs to 492 residues: G2/mitotic-specific cyclin CLB2 (492 aa).

A disordered region spans residues 1–176 (MPQVTKTNNE…QPEVGERSQS (176 aa)). The segment covering 23–33 (QESISTIKNTT) has biased composition (polar residues). Residues 34 to 58 (ISNSQHKQQTQQQISSPPQVSVTSS) show a composition bias toward low complexity. The span at 59 to 83 (EGVSHVNTRQYLGDVSNQYITNAKP) shows a compositional bias: polar residues. Low complexity predominate over residues 111 to 135 (ASDNNNNGSTSSSSNSSNNNNNDAN). In terms of domain architecture, Cyclin N-terminal spans 208–334 (EIFSYYYELE…MLTILNFDLN (127 aa)).

It belongs to the cyclin family. Cyclin AB subfamily.

2/mitotic-specific cyclin essential for the control of the cell cycle at the G2/M (mitosis) transition. G2/M cyclins accumulate steadily during G2 and are abruptly destroyed at mitosis. Degradation is necessary for the cell to exit from mitosis. Plays a role in morphogenesis by negatively regulating polarized growth. Through binding to CDC28 regulates cytokinesis, partly by phosphorylation of the actomyosin ring component IQG1. Also involved in the phosphorylation of CDC6 and CDC54. The polypeptide is G2/mitotic-specific cyclin CLB2 (CLB2) (Candida albicans (strain SC5314 / ATCC MYA-2876) (Yeast)).